The following is a 389-amino-acid chain: MKVVSLFSGIGGIELGLHQSGHTTEIFCEVDPLAKAVLSKNFPGVKIEDDINEIRELPSCDLVAAGFPCQDLSQAGGKEGIDGSRSGLVKKLFELIEKKEHANRPPWILIENVPYMLRLNRGKAMSYLTSVLSELGYTWAYRTVDARCFGLPQRRHRVILLASLFEDPKDVIFSQDHSEPDLDGKPSVVDHSNYYGFYWTEGLRGVGWAREAVPPIKCGSSVGIASPPAVWSPYEDIVGTINIRDAERLQGFPEDWTNITTETGKDIKEGARWRLVGNAVSVRVSKWIGENLSQPKGSISDFEGELVTKTWPSAAWGYGDKKYKVPVSKWVANTEQIAISEFLNHPLKPLSARALNGFLGRAARCTNVNYSDEFINSLERCKDRQLQKV.

One can recognise an SAM-dependent MTase C5-type domain in the interval M1–I299. Residue C69 is part of the active site.

This sequence belongs to the class I-like SAM-binding methyltransferase superfamily. C5-methyltransferase family. As to quaternary structure, monomer. May form a complex with YdiP, also seems to be active alone.

It catalyses the reaction a 2'-deoxycytidine in DNA + S-adenosyl-L-methionine = a 5-methyl-2'-deoxycytidine in DNA + S-adenosyl-L-homocysteine + H(+). Its activity is regulated as follows. Somewhat inhibited by MgCl(2) and spermidine, strongly inhibited by MnCl(2). In terms of biological role, a methylase, recognizes the double-stranded sequence 5'-YTCGAR-3', methylates C-3 on both strands, and protects the DNA from cleavage by the BsuMI endonuclease. The protein is Type II methyltransferase M2.BsuMI (ydiP) of Bacillus subtilis (strain 168).